The chain runs to 182 residues: Adenine phosphoribosyltransferase (182 aa).

It belongs to the purine/pyrimidine phosphoribosyltransferase family. As to quaternary structure, homodimer.

It is found in the cytoplasm. The catalysed reaction is AMP + diphosphate = 5-phospho-alpha-D-ribose 1-diphosphate + adenine. It functions in the pathway purine metabolism; AMP biosynthesis via salvage pathway; AMP from adenine: step 1/1. In terms of biological role, catalyzes a salvage reaction resulting in the formation of AMP, that is energically less costly than de novo synthesis. This Streptomyces galbus protein is Adenine phosphoribosyltransferase.